The primary structure comprises 976 residues: Vacuolar membrane protease (976 aa).

The Cytoplasmic portion of the chain corresponds to 1–15 (MKLKSVFRSVLKYRK). Residues 16 to 36 (TNLSLLLLITYSIITLLYIFD) form a helical membrane-spanning segment. At 37 to 359 (HERYKLNLPK…KFFVISAKTL (323 aa)) the chain is on the vacuolar side. Asparagine 96 and asparagine 121 each carry an N-linked (GlcNAc...) asparagine glycan. Positions 156 and 168 each coordinate Zn(2+). Residue asparagine 189 is glycosylated (N-linked (GlcNAc...) asparagine). Catalysis depends on glutamate 200, which acts as the Proton acceptor. A Zn(2+)-binding site is contributed by glutamate 201. Residues asparagine 212 and asparagine 217 are each glycosylated (N-linked (GlcNAc...) asparagine). The Zn(2+) site is built by glutamate 226 and histidine 300. The chain crosses the membrane as a helical span at residues 360–380 (FYWNCIFLLVSPVVAIGLYLI). Topologically, residues 381 to 392 (SRDRMTWKSHSW) are cytoplasmic. A helical membrane pass occupies residues 393–412 (LSWTRFPLSLAAGIIVQKLF). Over 413–428 (SNDIIRSNPLTFSRNY) the chain is Vacuolar. The chain crosses the membrane as a helical span at residues 429–449 (FWPISAFFTQVIFTSYVLINC). Topologically, residues 450 to 461 (SNFFFPCADMKS) are cytoplasmic. Residues 462-482 (LSIIELFIILWTILLFTSKLL) traverse the membrane as a helical segment. The Vacuolar portion of the chain corresponds to 483–496 (YSSDYRYTGLYPLS). A helical transmembrane segment spans residues 497 to 517 (IFFLLSTIAAILRLLALALGM). The Cytoplasmic segment spans residues 518–627 (RTRKRLGREC…NSLKLEYTDY (110 aa)). The segment at 528 to 610 (RDHHSNYSSH…PLLKGSNSME (83 aa)) is disordered. Over residues 549-558 (NLEQPQDQFT) the composition is skewed to polar residues. Positions 559–570 (SSQDDQASIQDD) are enriched in low complexity. The segment covering 582-601 (NVDEDHGMDSSSQQHDERVP) has biased composition (basic and acidic residues). Residues 628–648 (AWIIQFLLIVPIPSFILFNSV) traverse the membrane as a helical segment. Over 649 to 668 (DVIMDALNHTVQEGSKATFD) the chain is Vacuolar. N-linked (GlcNAc...) asparagine glycosylation is present at asparagine 656. A helical transmembrane segment spans residues 669-689 (VLRFGMVGSILMALPILPFFY). At 690–692 (KVN) the chain is on the cytoplasmic side. The chain crosses the membrane as a helical span at residues 693 to 713 (YITISLTALLFLISASKTLLV). Residues 714–976 (HPFTNSNPLK…LVIVKDAIIL (263 aa)) lie on the Vacuolar side of the membrane. N-linked (GlcNAc...) asparagine glycans are attached at residues asparagine 768, asparagine 796, asparagine 811, asparagine 866, and asparagine 937.

It belongs to the peptidase M28 family. Zn(2+) serves as cofactor.

The protein localises to the vacuole membrane. In terms of biological role, may be involved in vacuolar sorting and osmoregulation. This Saccharomyces cerevisiae (strain YJM789) (Baker's yeast) protein is Vacuolar membrane protease.